The sequence spans 319 residues: MRVLLIAGGVSPEHEVSLLSAEGVLRHMPFPTDLAVIARDGRWLLGEKALAALEAKAAPEGEHPFPPPLPWERYDVVFPLLHGRFGEDGTVQGFLELLGKPYVGAGVAASALCMDKDLSKRVLAQAGVPVVPWVAVRKGEPSMVPFDPPFFVKPANTGSSVGISRVERFQDLEAALALAFRYDEKAVVEKALSPVRELEVGVLGNVFGEASPVGEVRYEAPFYDYETKYTPGRAELLIPAPLDPGTQETVQELALKAYKVLGVRGMARVDFFLAEGEVYLNELNTIPGFTPTSMYPRLFEAGGVAYPELLRRLVELALT.

The 196-residue stretch at 120-315 (KRVLAQAGVP…YPELLRRLVE (196 aa)) folds into the ATP-grasp domain. Position 147–198 (147–198 (DPPFFVKPANTGSSVGISRVERFQDLEAALALAFRYDEKAVVEKALSPVREL)) interacts with ATP. The Mg(2+) site is built by D270, E282, and N284.

It belongs to the D-alanine--D-alanine ligase family. Mg(2+) is required as a cofactor. It depends on Mn(2+) as a cofactor.

The protein localises to the cytoplasm. It catalyses the reaction 2 D-alanine + ATP = D-alanyl-D-alanine + ADP + phosphate + H(+). The protein operates within cell wall biogenesis; peptidoglycan biosynthesis. Cell wall formation. The chain is D-alanine--D-alanine ligase from Thermus thermophilus (strain ATCC BAA-163 / DSM 7039 / HB27).